The chain runs to 492 residues: N-succinylglutamate 5-semialdehyde dehydrogenase (492 aa).

220–225 (GSASTG) contributes to the NAD(+) binding site. Catalysis depends on residues E243 and C277.

This sequence belongs to the aldehyde dehydrogenase family. AstD subfamily.

It catalyses the reaction N-succinyl-L-glutamate 5-semialdehyde + NAD(+) + H2O = N-succinyl-L-glutamate + NADH + 2 H(+). Its pathway is amino-acid degradation; L-arginine degradation via AST pathway; L-glutamate and succinate from L-arginine: step 4/5. Functionally, catalyzes the NAD-dependent reduction of succinylglutamate semialdehyde into succinylglutamate. The protein is N-succinylglutamate 5-semialdehyde dehydrogenase of Salmonella dublin (strain CT_02021853).